The primary structure comprises 124 residues: Small ribosomal subunit protein bS6 (124 aa).

Residues 96-124 (ETAPSPMMKEVQREEARKAAQTTTEGQAA) are disordered. Polar residues predominate over residues 115–124 (AQTTTEGQAA).

The protein belongs to the bacterial ribosomal protein bS6 family.

Functionally, binds together with bS18 to 16S ribosomal RNA. The sequence is that of Small ribosomal subunit protein bS6 from Cupriavidus pinatubonensis (strain JMP 134 / LMG 1197) (Cupriavidus necator (strain JMP 134)).